Consider the following 44-residue polypeptide: Phosphatase RapE inhibitor (44 aa).

Propeptides lie at residues 1 to 30 and 36 to 44; these read MKSK…MKEA and LAPTHEFLV.

It belongs to the Phr family. In terms of processing, contains a predicted signal peptide cleavage site in the N-terminal region, however the propeptide is probably only subject to processing events at the ends of the mature peptide.

The protein localises to the secreted. The protein resides in the cytoplasm. Its function is as follows. Signaling molecule involved in the regulation of sporulation. Secreted during production, but the mature peptide acts intracellularly, indicating that it needs to be imported into the cell to function. Inhibitor of the RapE phosphatase activity. Does not inhibit the phosphatase activity of RapA and RapB. Probably plays a dispensable role in the overall context of sporulation initiation. The chain is Phosphatase RapE inhibitor (phrE) from Bacillus subtilis (strain 168).